Consider the following 73-residue polypeptide: Large ribosomal subunit protein uL29 (73 aa).

The protein belongs to the universal ribosomal protein uL29 family.

The chain is Large ribosomal subunit protein uL29 (rpmC) from Synechocystis sp. (strain ATCC 27184 / PCC 6803 / Kazusa).